The following is a 283-amino-acid chain: ESX-1 secretion-associated protein EspG1 (283 aa).

The protein belongs to the EspG family. In terms of assembly, interacts specifically with ESX-1-dependent PE/PPE proteins. Interacts with PPE68.

Its subcellular location is the cytoplasm. Functionally, specific chaperone for cognate PE/PPE proteins. Plays an important role in preventing aggregation of PE/PPE dimers. The polypeptide is ESX-1 secretion-associated protein EspG1 (Mycobacterium tuberculosis (strain ATCC 25618 / H37Rv)).